The chain runs to 424 residues: Inositol phosphosphingolipids phospholipase C (424 aa).

Residue Glu49 participates in Mg(2+) binding. His289 acts as the Proton acceptor in catalysis. The next 2 membrane-spanning stretches (helical) occupy residues 335-357 (LRIAHLLISIPLIIGVHVAIAWC) and 364-386 (VIILFFTVMLTIAAVVNGFCIGL).

It belongs to the neutral sphingomyelinase family. Requires Mg(2+) as cofactor.

It localises to the cell membrane. The protein resides in the endoplasmic reticulum membrane. It participates in lipid metabolism; sphingolipid metabolism. In terms of biological role, inositol phosphosphingolipids phospholipase essential for the coordination of cell wall formation. Responsible for the hydrolysis of the phosphosphingolipids (IPS), inositol phosphorylceramide (IPC), mannosylinositol phosphorylceramide (MIPC), and mannosyldiinositol phosphorylceramide (M(IP)2C). This chain is Inositol phosphosphingolipids phospholipase C (css1), found in Schizosaccharomyces pombe (strain 972 / ATCC 24843) (Fission yeast).